The chain runs to 264 residues: Meiotic recombination protein REC102 (264 aa).

It belongs to the TOP6B-like family. As to quaternary structure, interacts with REC104; seems to form a functional unit with REC104. REC102-REC104 interacts with SKI8-SPO11 and this interaction is required for proper subcellular location of the proteins during the initiation of recombination. Interacts with MEI4, REC114 and SPO11.

Its subcellular location is the nucleus. Its function is as follows. Required for formation of the SPO11-mediated double-strand breaks (DSBs) that initiate meiotic recombination. May mediate the interaction between SPO11 subunits during meiosis. Also needed for homolog chromosome pairing, synaptonemal complex formation, and for the proper timing of the first meiotic division. Not required for mitosis and mitotic DNA repair mechanisms. This chain is Meiotic recombination protein REC102, found in Saccharomyces cerevisiae (strain ATCC 204508 / S288c) (Baker's yeast).